We begin with the raw amino-acid sequence, 621 residues long: Chaperone protein HtpG (621 aa).

The segment at 1–341 is a; substrate-binding; that stretch reads MSNQEYTFQT…SEDLPLNVSR (341 aa). The segment at 342–547 is b; it reads EILQQNKILA…GDEQNAMMAN (206 aa). The segment at 548–621 is c; sequence LMRQMGQNMP…RLNSVLLKAL (74 aa).

The protein belongs to the heat shock protein 90 family. As to quaternary structure, homodimer.

Its subcellular location is the cytoplasm. Functionally, molecular chaperone. Has ATPase activity. The protein is Chaperone protein HtpG of Helicobacter acinonychis (strain Sheeba).